The primary structure comprises 189 residues: PTS system glucose-specific EIIA component (189 aa).

The region spanning 31-135 is the PTS EIIA type-1 domain; that stretch reads DEAFAEKIVG…SVITPVVIAN (105 aa). 2 residues coordinate Zn(2+): H68 and H83. The active-site Tele-phosphohistidine intermediate; for EIIA activity is H83. Residue H83 is modified to Phosphohistidine; by HPr.

As to quaternary structure, heterodimer with glycerol kinase (glpk). Requires Zn(2+) as cofactor.

Its subcellular location is the cytoplasm. The phosphoenolpyruvate-dependent sugar phosphotransferase system (sugar PTS), a major carbohydrate active transport system, catalyzes the phosphorylation of incoming sugar substrates concomitantly with their translocation across the cell membrane. The enzyme II complex composed of PtsG and Crr is involved in glucose transport. This is PTS system glucose-specific EIIA component (crr) from Borreliella burgdorferi (strain ATCC 35210 / DSM 4680 / CIP 102532 / B31) (Borrelia burgdorferi).